The following is a 339-amino-acid chain: Glycerol-3-phosphate dehydrogenase [NAD(P)+] (339 aa).

NADPH contacts are provided by Ser-13, Trp-14, and Lys-108. Lys-108, Gly-139, and Ser-141 together coordinate sn-glycerol 3-phosphate. Ala-143 is an NADPH binding site. Residues Lys-194, Asp-247, Ser-257, Arg-258, and Asn-259 each contribute to the sn-glycerol 3-phosphate site. The active-site Proton acceptor is Lys-194. Arg-258 provides a ligand contact to NADPH. 2 residues coordinate NADPH: Val-282 and Glu-284.

This sequence belongs to the NAD-dependent glycerol-3-phosphate dehydrogenase family.

Its subcellular location is the cytoplasm. The enzyme catalyses sn-glycerol 3-phosphate + NAD(+) = dihydroxyacetone phosphate + NADH + H(+). It carries out the reaction sn-glycerol 3-phosphate + NADP(+) = dihydroxyacetone phosphate + NADPH + H(+). It functions in the pathway membrane lipid metabolism; glycerophospholipid metabolism. In terms of biological role, catalyzes the reduction of the glycolytic intermediate dihydroxyacetone phosphate (DHAP) to sn-glycerol 3-phosphate (G3P), the key precursor for phospholipid synthesis. The protein is Glycerol-3-phosphate dehydrogenase [NAD(P)+] of Streptococcus equi subsp. equi (strain 4047).